Consider the following 499-residue polypeptide: 2-isopropylmalate synthase (499 aa).

In terms of domain architecture, Pyruvate carboxyltransferase spans 5–267 (IKIFDTTLRD…ETGINLGEIA (263 aa)). Residues aspartate 14, histidine 202, histidine 204, and asparagine 238 each coordinate Mn(2+). Residues 391 to 499 (SVEVLHVISG…YLSALNRIRR (109 aa)) are regulatory domain.

It belongs to the alpha-IPM synthase/homocitrate synthase family. LeuA type 1 subfamily. Mn(2+) serves as cofactor.

The protein resides in the cytoplasm. The catalysed reaction is 3-methyl-2-oxobutanoate + acetyl-CoA + H2O = (2S)-2-isopropylmalate + CoA + H(+). Its pathway is amino-acid biosynthesis; L-leucine biosynthesis; L-leucine from 3-methyl-2-oxobutanoate: step 1/4. Catalyzes the condensation of the acetyl group of acetyl-CoA with 3-methyl-2-oxobutanoate (2-ketoisovalerate) to form 3-carboxy-3-hydroxy-4-methylpentanoate (2-isopropylmalate). In Pyrococcus furiosus (strain ATCC 43587 / DSM 3638 / JCM 8422 / Vc1), this protein is 2-isopropylmalate synthase.